Consider the following 346-residue polypeptide: N-acetyl-gamma-glutamyl-phosphate reductase (346 aa).

The active site involves Cys149.

This sequence belongs to the NAGSA dehydrogenase family. Type 1 subfamily.

The protein localises to the cytoplasm. It catalyses the reaction N-acetyl-L-glutamate 5-semialdehyde + phosphate + NADP(+) = N-acetyl-L-glutamyl 5-phosphate + NADPH + H(+). Its pathway is amino-acid biosynthesis; L-arginine biosynthesis; N(2)-acetyl-L-ornithine from L-glutamate: step 3/4. Functionally, catalyzes the NADPH-dependent reduction of N-acetyl-5-glutamyl phosphate to yield N-acetyl-L-glutamate 5-semialdehyde. This Geobacter metallireducens (strain ATCC 53774 / DSM 7210 / GS-15) protein is N-acetyl-gamma-glutamyl-phosphate reductase.